Here is a 118-residue protein sequence, read N- to C-terminus: Holo-[acyl-carrier-protein] synthase (118 aa).

Residues D8 and E58 each coordinate Mg(2+).

This sequence belongs to the P-Pant transferase superfamily. AcpS family. It depends on Mg(2+) as a cofactor.

Its subcellular location is the cytoplasm. It catalyses the reaction apo-[ACP] + CoA = holo-[ACP] + adenosine 3',5'-bisphosphate + H(+). Functionally, transfers the 4'-phosphopantetheine moiety from coenzyme A to a Ser of acyl-carrier-protein. The sequence is that of Holo-[acyl-carrier-protein] synthase from Lactobacillus helveticus (strain DPC 4571).